Consider the following 127-residue polypeptide: Gamma-synuclein (127 aa).

Tandem repeats lie at residues 20–30 and 31–41. The interval 20 to 67 is 4 X 11 AA tandem repeats of [EGSA]-K-T-K-[EQ]-[GQ]-V-X(4); it reads EKTKQGVTEAAEKTKEGVMYVGTKTKENVVHSVTSVAEKTKEQANAVS. The 3; approximate repeat unit spans residues 42-56; it reads TKTKENVVHSVTSVA. Residues 57 to 67 form repeat 4; the sequence is EKTKEQANAVS. S67 and S72 each carry phosphoserine. The disordered stretch occupies residues 97 to 127; it reads KEDLKPSAPQQEGEAAKEKEEVAEEAQSGGD. Phosphoserine; by BARK1, CaMK2 and CK2 is present on S124.

It belongs to the synuclein family. In terms of assembly, may be a centrosome-associated protein. Interacts with MYOC; affects its secretion and its aggregation. In terms of processing, phosphorylated. Phosphorylation by GRK5 appears to occur on residues distinct from the residue phosphorylated by other kinases.

Its subcellular location is the cytoplasm. The protein localises to the perinuclear region. It is found in the cytoskeleton. It localises to the microtubule organizing center. The protein resides in the centrosome. Its subcellular location is the spindle. Functionally, plays a role in neurofilament network integrity. May be involved in modulating axonal architecture during development and in the adult. In vitro, increases the susceptibility of neurofilament-H to calcium-dependent proteases. May also function in modulating the keratin network in skin. Activates the MAPK and Elk-1 signal transduction pathway. The chain is Gamma-synuclein (SNCG) from Macaca fascicularis (Crab-eating macaque).